The primary structure comprises 566 residues: Unconventional myosin-VIIa (566 aa).

Positions 67 to 566 (MMEDMIQHLG…AGVVYYESQG (500 aa)) constitute a Myosin motor domain. 160–167 (GESGAGKT) provides a ligand contact to ATP.

The protein belongs to the TRAFAC class myosin-kinesin ATPase superfamily. Myosin family. As to quaternary structure, might homodimerize in a two headed molecule through the formation of a coiled-coil rod. Identified in a complex with USH1C and USH1G. Interacts with MYRIP. Interacts with RPE65. Interacts with CIB2. May interact with CALM. Interacts with WHRN. Interacts with PLEKHB1 (via PH domain). Interacts with PCDH15. Interacts with TWF2. Interacts with USH1G. Interacts with MYH9. Interacts (via MyTH4-FERM domains) with cytoplasmic regions of ADGRV1 and USH2A. Interacts with PDZD7 (via MyTH4-FERM domains). Interacts with CALML4.

The protein resides in the cytoplasm. It is found in the cell cortex. Its subcellular location is the cytoskeleton. The protein localises to the synapse. Its function is as follows. Myosins are actin-based motor molecules with ATPase activity. Unconventional myosins serve in intracellular movements. Their highly divergent tails bind to membranous compartments, which are then moved relative to actin filaments. In the retina, plays an important role in the renewal of the outer photoreceptor disks. Plays an important role in the distribution and migration of retinal pigment epithelial (RPE) melanosomes and phagosomes, and in the regulation of opsin transport in retinal photoreceptors. In the inner ear, plays an important role in differentiation, morphogenesis and organization of cochlear hair cell bundles. Motor protein that is a part of the functional network formed by USH1C, USH1G, CDH23 and MYO7A that mediates mechanotransduction in cochlear hair cells. Required for normal hearing. Involved in hair-cell vesicle trafficking of aminoglycosides, which are known to induce ototoxicity. In Sus scrofa (Pig), this protein is Unconventional myosin-VIIa (MYO7A).